A 469-amino-acid chain; its full sequence is Collagenase 3 (469 aa).

The N-terminal stretch at 1-17 is a signal peptide; that stretch reads SSLSVLVLSLSFAYCLS. A propeptide spans 18–100 (activation peptide); sequence APVPQDEDSE…QPRCGVPDVG (83 aa). The Cysteine switch motif lies at 92 to 99; it reads PRCGVPDV. Cysteine 94 is a Zn(2+) binding site. An N-linked (GlcNAc...) asparagine glycan is attached at asparagine 115. Position 126 (aspartate 126) interacts with Ca(2+). N-linked (GlcNAc...) asparagine glycosylation is present at asparagine 150. Residue aspartate 160 participates in Ca(2+) binding. Zn(2+) is bound by residues histidine 170 and aspartate 172. Residues aspartate 177, glycine 178, and leucine 182 each contribute to the Ca(2+) site. A Zn(2+)-binding site is contributed by histidine 185. Residues glycine 194 and aspartate 196 each contribute to the Ca(2+) site. Histidine 198 contributes to the Zn(2+) binding site. 3 residues coordinate Ca(2+): aspartate 200, aspartate 201, and glutamate 203. A Zn(2+)-binding site is contributed by histidine 220. Residue glutamate 221 is part of the active site. Zn(2+)-binding residues include histidine 224, histidine 230, and methionine 238. An interaction with collagen region spans residues 266–469; it reads PGNRDPHPKH…ILKTNFVLMC (204 aa). Hemopexin repeat units follow at residues 279 to 328, 329 to 375, 377 to 425, and 426 to 469; these read PEKC…WPEL, PNKL…GFPK, LKAI…FPGI, and GEKV…VLMC. Cysteine 282 and cysteine 469 form a disulfide bridge. Residues aspartate 289, isoleucine 291, aspartate 333, alanine 335, alanine 383, and aspartate 430 each coordinate Ca(2+).

The protein belongs to the peptidase M10A family. Ca(2+) is required as a cofactor. It depends on Zn(2+) as a cofactor. Post-translationally, the proenzyme is activated by removal of the propeptide; this cleavage can be effected by other matrix metalloproteinases and may involve several cleavage steps. Cleavage can also be autocatalytic, after partial maturation by another protease or after treatment with 4-aminophenylmercuric acetate (APMA) (in vitro).

The protein localises to the secreted. It is found in the extracellular space. It localises to the extracellular matrix. In terms of biological role, plays a role in the degradation of extracellular matrix proteins including fibrillar collagen, fibronectin, TNC and ACAN. Cleaves several types of triple helical collagen. May also function by activating or degrading key regulatory proteins. Plays a role in wound healing, tissue remodeling, cartilage degradation, bone development, bone mineralization and ossification. The chain is Collagenase 3 (mmp13) from Xenopus laevis (African clawed frog).